Here is a 674-residue protein sequence, read N- to C-terminus: L-type lectin-domain containing receptor kinase SIT1 (674 aa).

Residues 1 to 27 (MRRPELIMRSLPLILFLSLGSFHLAAA) form the signal peptide. The Extracellular segment spans residues 28–301 (AVDDQFTFDG…IARAPSNVLK (274 aa)). The interval 31-275 (DQFTFDGFAG…VLAWSFKMDG (245 aa)) is legume-lectin like. 7 N-linked (GlcNAc...) asparagine glycosylation sites follow: Asn-42, Asn-61, Asn-143, Asn-196, Asn-219, Asn-240, and Asn-281. The chain crosses the membrane as a helical span at residues 302-322 (ILLPIASAALVSALAIAVLVI). At 323 to 674 (HRRRRRYAEL…GNISDIPRAR (352 aa)) the chain is on the cytoplasmic side. A Protein kinase domain is found at 357–636 (FSDERLLGFG…LDGAMPLPEL (280 aa)). ATP-binding positions include 363–371 (LGFGGFGRV) and Lys-386. Asp-482 functions as the Proton acceptor in the catalytic mechanism. 4 positions are modified to phosphothreonine: Thr-511, Thr-515, Thr-516, and Thr-521.

The protein in the C-terminal section; belongs to the protein kinase superfamily. Ser/Thr protein kinase family. This sequence in the N-terminal section; belongs to the leguminous lectin family. Interacts with B'KAPPA. Post-translationally, autophosphorylated at Thr-511, Thr-515 or Thr-516, and Thr-521 in response to salt stress. Dephosphorylated by phosphatase 2A in response to salt stress. In terms of tissue distribution, expressed in root epidermal cells.

Its subcellular location is the cell membrane. The catalysed reaction is L-seryl-[protein] + ATP = O-phospho-L-seryl-[protein] + ADP + H(+). The enzyme catalyses L-threonyl-[protein] + ATP = O-phospho-L-threonyl-[protein] + ADP + H(+). Its activity is regulated as follows. Activated by autophosphorylation in response to salt stress. Its function is as follows. Lectin-domain containing receptor kinase involved in salt stress response. Acts as a negative regulator of salt tolerance. Mediates salt sensitivity by phosphorylating and activating MPK3 and MPK6. Promotes ethylene production and mediates salt-induced ethylene signaling. Promotes the accumulation of reactive oxygen species (ROS) under salt stress conditions. Its kinase activity is triggered by salt stress and is required for its function in salt stress response. Phosphorylates B'KAPPA, a B regulatory subunit of phosphatase 2A (PP2A). The sequence is that of L-type lectin-domain containing receptor kinase SIT1 from Oryza sativa subsp. japonica (Rice).